Here is a 780-residue protein sequence, read N- to C-terminus: Semaphorin-3G (780 aa).

An N-terminal signal peptide occupies residues 1–22 (MDPSAWAICCLLGSLLFHVGIP). Residues 32 to 519 (RLRLSYRDLL…SPLGVARLQL (488 aa)) enclose the Sema domain. N-linked (GlcNAc...) asparagine glycosylation is present at N44. C105 and C116 are disulfide-bonded. N127 is a glycosylation site (N-linked (GlcNAc...) asparagine). 5 cysteine pairs are disulfide-bonded: C134–C143, C270–C382, C294–C342, C522–C540, and C603–C655. The region spanning 569–671 (PAVQCLGQGQ…FSQTVVRFAL (103 aa)) is the Ig-like C2-type domain. An N-linked (GlcNAc...) asparagine glycan is attached at N652.

The protein belongs to the semaphorin family. Highly expressed in lung and kidney. Weakly expressed in brain.

Its subcellular location is the secreted. In terms of biological role, has chemorepulsive activities for sympathetic axons. Ligand of NRP2. The sequence is that of Semaphorin-3G (Sema3g) from Mus musculus (Mouse).